A 392-amino-acid chain; its full sequence is Chorismate synthase (392 aa).

Residues Arg-40 and Arg-46 each coordinate NADP(+). FMN contacts are provided by residues 129–131 (RSS), 257–258 (QA), Gly-302, 317–321 (KPIAT), and Arg-343.

It belongs to the chorismate synthase family. As to quaternary structure, homotetramer. FMNH2 serves as cofactor.

It catalyses the reaction 5-O-(1-carboxyvinyl)-3-phosphoshikimate = chorismate + phosphate. Its pathway is metabolic intermediate biosynthesis; chorismate biosynthesis; chorismate from D-erythrose 4-phosphate and phosphoenolpyruvate: step 7/7. Functionally, catalyzes the anti-1,4-elimination of the C-3 phosphate and the C-6 proR hydrogen from 5-enolpyruvylshikimate-3-phosphate (EPSP) to yield chorismate, which is the branch point compound that serves as the starting substrate for the three terminal pathways of aromatic amino acid biosynthesis. This reaction introduces a second double bond into the aromatic ring system. The protein is Chorismate synthase of Chloroherpeton thalassium (strain ATCC 35110 / GB-78).